Consider the following 414-residue polypeptide: Protein MAK11 (414 aa).

Residue Ser-2 is modified to N-acetylserine. WD repeat units lie at residues 50-78 (AHSLSIKCLAVSRRYLVSGSNDEHIRIYD), 90-135 (SHQG…MVWR), 147-177 (GHTARVNDVDIHPTNRIAISVSDDHSIRLWN), 189-221 (LRKYNTNGTCVRWLGAKGDYFAVGLRDRVLIYE), 238-267 (LMHIETHILPFDNKEYLSVGISDGNVHFYP), and 298-330 (GHTNRIKDFKFYTNEFGTYLVTIGSDGKIVVWD). 2 positions are modified to phosphoserine: Ser-376 and Ser-380. A Phosphothreonine modification is found at Thr-382.

As to quaternary structure, associates with 60S pre-ribosomal particles.

Its subcellular location is the nucleus. The protein resides in the nucleolus. It localises to the nucleus membrane. In terms of biological role, essential for cell growth. Plays a role in assembly of 60S pre-ribosomal particles in the nucleolus. Also required for replication of the M1 double-stranded RNA of the L-A virus. This latter function may reflect an enhanced requirement for free 60S ribosomal particles for the translation of viral mRNAs which lack poly-A tails. In Saccharomyces cerevisiae (strain ATCC 204508 / S288c) (Baker's yeast), this protein is Protein MAK11 (MAK11).